Here is a 20-residue protein sequence, read N- to C-terminus: Large ribosomal subunit protein bL33 (20 aa).

The protein belongs to the bacterial ribosomal protein bL33 family.

The sequence is that of Large ribosomal subunit protein bL33 (rpmG) from Brevundimonas vesicularis (Pseudomonas vesicularis).